The chain runs to 384 residues: Putative glutamate--cysteine ligase 2 (384 aa).

It belongs to the glutamate--cysteine ligase type 2 family. YbdK subfamily.

It catalyses the reaction L-cysteine + L-glutamate + ATP = gamma-L-glutamyl-L-cysteine + ADP + phosphate + H(+). In terms of biological role, ATP-dependent carboxylate-amine ligase which exhibits weak glutamate--cysteine ligase activity. This chain is Putative glutamate--cysteine ligase 2, found in Dechloromonas aromatica (strain RCB).